The sequence spans 596 residues: RNA-binding protein involved in heterochromatin assembly dri1 (596 aa).

Residue S176 is modified to Phosphoserine. In terms of domain architecture, RRM spans 236–314 (KIVHVAGLTN…RMLEIIPSST (79 aa)). The segment at 335–364 (RPGDWNCPMCGFSNFQRRTSCFRCSFPGPT) adopts a RanBP2-type 1 zinc-finger fold. S429 is modified (phosphoserine). 2 consecutive RanBP2-type zinc fingers follow at residues 437 to 468 (RAGDWKCGSEGCGYHNFAKNVCCLRCGASRAT) and 552 to 580 (DQGDWLCECGFTNFRRRSNCLRCNAPHYS).

In terms of assembly, interacts with dpb4. Interacts with chp1.

The protein resides in the chromosome. The protein localises to the nucleus. It localises to the cytoplasm. Its subcellular location is the cytoplasmic granule. In terms of biological role, mediates heterochromatin assembly by promoting RNAi-mediated heterochromatin silencing and histone deacetylation. Binds pericetromeric transcripts and recruits the RNA-induced transcriptional silencing (RITS) complex to heterochromatin. Recruits sir2 to chromatin to promote deacetylation of 'Lys-9' of histone H3. Involved in bipolar spindle assembly during mitosis. Required for proper localization of kinesin-14/Klp2 on the spindle microtubules. The chain is RNA-binding protein involved in heterochromatin assembly dri1 from Schizosaccharomyces pombe (strain 972 / ATCC 24843) (Fission yeast).